A 188-amino-acid chain; its full sequence is Adenine phosphoribosyltransferase (188 aa).

It belongs to the purine/pyrimidine phosphoribosyltransferase family. Homodimer.

Its subcellular location is the cytoplasm. The enzyme catalyses AMP + diphosphate = 5-phospho-alpha-D-ribose 1-diphosphate + adenine. Its pathway is purine metabolism; AMP biosynthesis via salvage pathway; AMP from adenine: step 1/1. Its function is as follows. Catalyzes a salvage reaction resulting in the formation of AMP, that is energically less costly than de novo synthesis. The chain is Adenine phosphoribosyltransferase from Burkholderia ambifaria (strain MC40-6).